A 33-amino-acid chain; its full sequence is Brevinin-2DYd (33 aa).

An intrachain disulfide couples Cys27 to Cys33.

As to expression, expressed by the skin glands.

It localises to the secreted. Its function is as follows. Antimicrobial peptide. A mixture of Brevinin-2DYc/2DYd is active against the Gram-positive bacterium S.aureus (MIC=15 uM) and the Gram-negative bacterium E.coli (MIC=15 uM). This is Brevinin-2DYd from Rana dybowskii (Dybovsky's frog).